A 581-amino-acid polypeptide reads, in one-letter code: Proline--tRNA ligase 1 (581 aa).

Belongs to the class-II aminoacyl-tRNA synthetase family. ProS type 1 subfamily. As to quaternary structure, homodimer.

Its subcellular location is the cytoplasm. It catalyses the reaction tRNA(Pro) + L-proline + ATP = L-prolyl-tRNA(Pro) + AMP + diphosphate. In terms of biological role, catalyzes the attachment of proline to tRNA(Pro) in a two-step reaction: proline is first activated by ATP to form Pro-AMP and then transferred to the acceptor end of tRNA(Pro). As ProRS can inadvertently accommodate and process non-cognate amino acids such as alanine and cysteine, to avoid such errors it has two additional distinct editing activities against alanine. One activity is designated as 'pretransfer' editing and involves the tRNA(Pro)-independent hydrolysis of activated Ala-AMP. The other activity is designated 'posttransfer' editing and involves deacylation of mischarged Ala-tRNA(Pro). The misacylated Cys-tRNA(Pro) is not edited by ProRS. The polypeptide is Proline--tRNA ligase 1 (Rhodococcus jostii (strain RHA1)).